The primary structure comprises 412 residues: Proteasome-activating nucleotidase (412 aa).

Positions 18–72 form a coiled coil; that stretch reads YRYLVDRVAGMESQNQELKEQIRQLESDKRYIETQKIRYEREVRKLKSEIEHLKT. ATP contacts are provided by residues 197-202 and histidine 336; that span reads GTGKTL. Residues 410-412 are docks into pockets in the proteasome alpha-ring to cause gate opening; that stretch reads MFA.

Belongs to the AAA ATPase family. Homohexamer. The hexameric complex has a two-ring architecture resembling a top hat that caps the 20S proteasome core at one or both ends. Upon ATP-binding, the C-terminus of PAN interacts with the alpha-rings of the proteasome core by binding to the intersubunit pockets.

It localises to the cytoplasm. ATPase which is responsible for recognizing, binding, unfolding and translocation of substrate proteins into the archaeal 20S proteasome core particle. Is essential for opening the gate of the 20S proteasome via an interaction with its C-terminus, thereby allowing substrate entry and access to the site of proteolysis. Thus, the C-termini of the proteasomal ATPase function like a 'key in a lock' to induce gate opening and therefore regulate proteolysis. Unfolding activity requires energy from ATP hydrolysis, whereas ATP binding alone promotes ATPase-20S proteasome association which triggers gate opening, and supports translocation of unfolded substrates. The sequence is that of Proteasome-activating nucleotidase from Methanospirillum hungatei JF-1 (strain ATCC 27890 / DSM 864 / NBRC 100397 / JF-1).